We begin with the raw amino-acid sequence, 111 residues long: Rho GDP-dissociation inhibitor 1 (111 aa).

Residues lysine 57 and lysine 60 each participate in a glycyl lysine isopeptide (Lys-Gly) (interchain with G-Cter in SUMO1); alternate cross-link. Glycyl lysine isopeptide (Lys-Gly) (interchain with G-Cter in SUMO2); alternate cross-links involve residues lysine 57 and lysine 60. Lysine 60 is subject to N6-acetyllysine; alternate. An N6-succinyllysine; alternate modification is found at lysine 60.

This sequence belongs to the Rho GDI family. Monomer. Interacts with FER. Interacts with PLXNB3. Forms a heterodimer with RAC1. Interacts with RHOA, the affinity is increased by three orders of magnitude when RHOA is prenylated. Interacts with PSMD10; the interaction increases ARHGDIA association with RHOA, leading to ARHGDIA-mediated inactivation of RHOA and ROCK and prolonged AKT activation. Interacts with KANK2; the interaction is direct and may regulate the interaction of ARHGDIA with RHOA, RAC1 and CDC42. Interacts with RHOC. Interacts with CDC42. Interacts with NGFR (via death domain); NGFR binding decreases the affinity for RHOA. The N-terminus is blocked.

Its subcellular location is the cytoplasm. In terms of biological role, controls Rho proteins homeostasis. Regulates the GDP/GTP exchange reaction of the Rho proteins by inhibiting the dissociation of GDP from them, and the subsequent binding of GTP to them. Retains Rho proteins such as CDC42, RAC1 and RHOA in an inactive cytosolic pool, regulating their stability and protecting them from degradation. Actively involved in the recycling and distribution of activated Rho GTPases in the cell, mediates extraction from membranes of both inactive and activated molecules due its exceptionally high affinity for prenylated forms. Through the modulation of Rho proteins, may play a role in cell motility regulation. In glioma cells, inhibits cell migration and invasion by mediating the signals of SEMA5A and PLXNB3 that lead to inactivation of RAC1. In Cavia porcellus (Guinea pig), this protein is Rho GDP-dissociation inhibitor 1 (ARHGDIA).